The chain runs to 724 residues: uncharacterized protein (724 aa).

Disordered stretches follow at residues 1-23 (MEDREMSTKPESISSRPPEIPDN), 166-477 (PDGY…PPRD), 496-517 (EAHDSGTNTVVPLPDQPEAHGP), and 532-691 (DHPI…PALS). Polar residues-rich tracts occupy residues 227–245 (VSQSSFSPRTEGGPSTVNQ) and 270–296 (STTLGPAMNTFQRTTSPPVMHVTTSDA). Positions 304-322 (TRDHDRYGNGRGPDTDRLE) are enriched in basic and acidic residues. The span at 403–413 (PSSSHSETPNM) shows a compositional bias: polar residues. Composition is skewed to basic and acidic residues over residues 550–560 (RNHEFTEDKRL) and 637–657 (LRHDSRVGTPKHLENVHDLAA). Residues 682-691 (RLAAASPALS) show a composition bias toward low complexity.

This is an uncharacterized protein from Neurospora crassa (strain ATCC 24698 / 74-OR23-1A / CBS 708.71 / DSM 1257 / FGSC 987).